We begin with the raw amino-acid sequence, 163 residues long: uncharacterized protein (163 aa).

A helical transmembrane segment spans residues 7-23 (TLVAFIATFFNLAATSI).

The protein localises to the membrane. This is an uncharacterized protein from Saccharomyces cerevisiae (strain ATCC 204508 / S288c) (Baker's yeast).